The chain runs to 841 residues: MEQGVIERARELRRRIENADHRYYDLADPEITDAQYDQLFRELQELEQKYPELVTADSPSMRVGGAVRKSFVKVRHSIPMLSLANAFDEVEVKNFVDRIFRRMGSSNPLEFSVEPKFDGLAISLRYELGKFVQGVTRGDGDVGEDVSENIRTIRSVPLKLKGNNVPAILEVRGEVYMPRDGFSEFNKRAMARGEKLLANPRNGAAGSLRQLDSRISAQRPLSFFAYGVGLIQVEQDLFEEIPQSIASTHSAMLAQLRAWGFPVSSLVEVVQGSDGLLAYYQRIGEARDGLPFDIDGVVYKLDDLAGQREMGFVSRAPRWALAHKFPAQEQSTTVEAIEIQIGRTGAATPVARLKPVHVAGVIVTNATLHNADQIARLDVRVGDTVIVRRAGDVIPEVAAVVADQRPPATQSWQMPTQCPVCGSEIVREEGQAVWRCSGELTCPAQRKEAFRHFVSRRAMDVDGLGEKFIEVLVDSGVVQGVADLYLLTVDQLLQLRMISTAESPHAFLREAREHLASGAYAQLEATLVGIGVDLAGEREVPQTWQADLLRAGLPTFDWNRKKIATKWAENLIEAIETSRDTTLERFLFALGIEHVGESTAKALSAWFGDLDLIRHLPWPLFKRVPDIGGEVARSLGHFFDQPGNQKAIDHLLARKVRIGDTHPPSPKLRGELRLANLLEDLEIPKVTPIRAAQIATAFGSIDALRNGGPEPLVEAGVPQSVAESLATWLLVPANDTLAVKAQKKLSALLAMMPEAGEEKTGPLDGQTVVITGTLAALTRDAAKQRLEALGAKVAGSVSKKTAFLVAGEEAGSKLDKAQSLGVEIWDEARLLAFLGEHGQQR.

NAD(+)-binding positions include 33–37, 82–83, and Glu-114; these read DAQYD and SL. Lys-116 functions as the N6-AMP-lysine intermediate in the catalytic mechanism. Residues Arg-137, Glu-174, Lys-300, and Lys-324 each contribute to the NAD(+) site. Positions 418, 421, 436, and 442 each coordinate Zn(2+). Positions 758 to 841 constitute a BRCT domain; sequence EKTGPLDGQT…AFLGEHGQQR (84 aa).

Belongs to the NAD-dependent DNA ligase family. LigA subfamily. Mg(2+) is required as a cofactor. The cofactor is Mn(2+).

The catalysed reaction is NAD(+) + (deoxyribonucleotide)n-3'-hydroxyl + 5'-phospho-(deoxyribonucleotide)m = (deoxyribonucleotide)n+m + AMP + beta-nicotinamide D-nucleotide.. Functionally, DNA ligase that catalyzes the formation of phosphodiester linkages between 5'-phosphoryl and 3'-hydroxyl groups in double-stranded DNA using NAD as a coenzyme and as the energy source for the reaction. It is essential for DNA replication and repair of damaged DNA. The chain is DNA ligase from Xanthomonas oryzae pv. oryzae (strain KACC10331 / KXO85).